We begin with the raw amino-acid sequence, 383 residues long: L-lactate dehydrogenase (383 aa).

In terms of domain architecture, FMN hydroxy acid dehydrogenase spans 1 to 380; sequence MIVSSTTDFR…NETILAERVP (380 aa). Tyr-24 contributes to the substrate binding site. Positions 106 and 127 each coordinate FMN. Tyr-129 contacts substrate. Residue Thr-155 coordinates FMN. Arg-164 provides a ligand contact to substrate. Position 251 (Lys-251) interacts with FMN. The active-site Proton acceptor is His-275. Substrate is bound at residue Arg-278. 306 to 330 is a binding site for FMN; it reads DGGVRSGLDVVRMLALGARGVLIGR.

The protein belongs to the FMN-dependent alpha-hydroxy acid dehydrogenase family. Requires FMN as cofactor.

Its subcellular location is the cell inner membrane. The catalysed reaction is (S)-lactate + A = pyruvate + AH2. Functionally, catalyzes the conversion of L-lactate to pyruvate. Is coupled to the respiratory chain. This Caulobacter vibrioides (strain ATCC 19089 / CIP 103742 / CB 15) (Caulobacter crescentus) protein is L-lactate dehydrogenase.